The sequence spans 664 residues: Cyclic nucleotide-gated channel alpha-2 (664 aa).

Positions methionine 1–serine 11 are enriched in polar residues. Residues methionine 1–glutamate 49 are disordered. At methionine 1–leucine 144 the chain is on the cytoplasmic side. Residues proline 12–alanine 23 show a composition bias toward low complexity. Residues phenylalanine 145–aspartate 166 form a helical membrane-spanning segment. Topologically, residues leucine 167–leucine 176 are extracellular. Residues valine 177 to glycine 197 form a helical membrane-spanning segment. Over phenylalanine 198–lysine 222 the chain is Cytoplasmic. The chain crosses the membrane as a helical span at residues leucine 223–histidine 241. The Extracellular segment spans residues serine 242–arginine 246. A helical membrane pass occupies residues phenylalanine 247 to threonine 265. Residues arginine 266–isoleucine 272 lie on the Cytoplasmic side of the membrane. The interval proline 270–methionine 378 is ion conduction pathway. The chain crosses the membrane as a helical span at residues phenylalanine 273–isoleucine 296. At serine 297–tyrosine 319 the chain is on the extracellular side. Helical transmembrane passes span leucine 320–isoleucine 354 and phenylalanine 355–asparagine 379. The selectivity filter stretch occupies residues threonine 337–glutamate 340. A C-linker region spans residues alanine 380–histidine 456. At alanine 380 to proline 664 the chain is on the cytoplasmic side. The segment at alanine 460–lysine 580 is cyclic nucleotide-binding domain. 3',5'-cyclic GMP contacts are provided by glycine 520, serine 523, arginine 536, and threonine 537. 3',5'-cyclic AMP-binding residues include arginine 536 and threonine 537. Residues valine 597–aspartate 651 are a coiled coil. The disordered stretch occupies residues lysine 641–proline 664.

Belongs to the cyclic nucleotide-gated cation channel (TC 1.A.1.5) family. CNGA2 subfamily. The olfactory cyclic nucleotide-gated channel is an heterotetramer composed of CNGA2, CNGA4 and CNGB1b subunits with 2:1:1 stoichiometry.

It localises to the cell projection. The protein resides in the cilium membrane. It catalyses the reaction Ca(2+)(in) = Ca(2+)(out). It carries out the reaction Na(+)(in) = Na(+)(out). The catalysed reaction is K(+)(in) = K(+)(out). The enzyme catalyses NH4(+)(in) = NH4(+)(out). It catalyses the reaction Rb(+)(in) = Rb(+)(out). It carries out the reaction Li(+)(in) = Li(+)(out). The catalysed reaction is Cs(+)(in) = Cs(+)(out). Pore-forming subunit of the olfactory cyclic nucleotide-gated channel. Operates in the cilia of olfactory sensory neurons where chemical stimulation of the odorant is converted to an electrical signal. Mediates odorant-induced cAMP-dependent Ca(2+) influx triggering neuron depolarization. The rise of intracellular Ca(2+) levels potentiates the olfactory response by activating Ca(2+)-dependent Cl(-) channels, but it also serves as a negative feedback signal to desensitize the channel for rapid adaptation to odorants. Conducts cAMP- and cGMP-gated ion currents, with permeability for monovalent and divalent cations. The sequence is that of Cyclic nucleotide-gated channel alpha-2 from Homo sapiens (Human).